The sequence spans 82 residues: Antimicrobial peptide Smp43 (82 aa).

An N-terminal signal peptide occupies residues 1–22 (MNRKLLLVTLMVTMLVMQPAEA). Residues 66–82 (EAGQMPFDEFMDILYES) constitute a propeptide that is removed on maturation.

This sequence belongs to the non-disulfide-bridged peptide (NDBP) superfamily. Long chain multifunctional peptide (group 2) family. As to expression, expressed by the venom gland.

The protein localises to the secreted. Its subcellular location is the target cell membrane. Its function is as follows. Antimicrobial peptide with moderate activity against Gram-positive bacteria and Gram-negative bacteria, as well as low activity against fungi. Acts by inducing bacterial membrane disruption. Shows activity against B.subtilis (MIC=4 ug/ml), S.epidermidis (MIC=64 ug/ml), S.aureus (MIC=32 ug/ml), E.coli (MIC=128 ug/ml), K.pneumoniae (MIC=64 ug/ml), P.aeruginosa (MIC=64 ug/ml), and C.albicans (MIC=128 ug/ml). Does not show hemolysis activity. This is Antimicrobial peptide Smp43 from Scorpio palmatus (Israeli golden scorpion).